A 329-amino-acid chain; its full sequence is 4-hydroxythreonine-4-phosphate dehydrogenase (329 aa).

2 residues coordinate substrate: histidine 136 and threonine 137. Positions 166, 211, and 266 each coordinate a divalent metal cation. Substrate is bound by residues lysine 274, asparagine 283, and arginine 292.

Belongs to the PdxA family. Homodimer. Zn(2+) serves as cofactor. The cofactor is Mg(2+). Requires Co(2+) as cofactor.

It localises to the cytoplasm. It catalyses the reaction 4-(phosphooxy)-L-threonine + NAD(+) = 3-amino-2-oxopropyl phosphate + CO2 + NADH. It functions in the pathway cofactor biosynthesis; pyridoxine 5'-phosphate biosynthesis; pyridoxine 5'-phosphate from D-erythrose 4-phosphate: step 4/5. Its function is as follows. Catalyzes the NAD(P)-dependent oxidation of 4-(phosphooxy)-L-threonine (HTP) into 2-amino-3-oxo-4-(phosphooxy)butyric acid which spontaneously decarboxylates to form 3-amino-2-oxopropyl phosphate (AHAP). The protein is 4-hydroxythreonine-4-phosphate dehydrogenase of Escherichia coli O6:H1 (strain CFT073 / ATCC 700928 / UPEC).